Reading from the N-terminus, the 237-residue chain is MKLLIFSCLVTLALARPDALRLSIDRHFKHRELENRLNEDPIPVSEASSSEESVHQLNRDRRPLEKYELDKYREDLKTSSSEEFVTPSTNERVRRQVEYNFNEEDSSASRERKIEDFSEHDRQYLRRRVEERALNLRYLEPLYYATEPEYYYYYAYVPVSSHDIPYQQKPLSLLPAKSHYLISTGLLNEPLPILRERLGRGFQSPSLLILVLTENSNLFMGSVFYWCLQIAHPMQEI.

An N-terminal signal peptide occupies residues 1–15 (MKLLIFSCLVTLALA). The segment at 39–60 (EDPIPVSEASSSEESVHQLNRD) is disordered. Residues S79, S80, and S81 each carry the phosphoserine modification.

Belongs to the alpha-casein family. In terms of tissue distribution, mammary gland specific. Secreted in milk.

Its subcellular location is the secreted. Its function is as follows. Important role in the capacity of milk to transport calcium phosphate. The polypeptide is Alpha-S1-casein (CSN1S1) (Notamacropus eugenii (Tammar wallaby)).